A 328-amino-acid polypeptide reads, in one-letter code: Cytochrome c biogenesis protein CcsA (328 aa).

8 helical membrane-spanning segments follow: residues 13–33 (ISFS…LVNL), 46–66 (GIII…IYSG), 73–93 (LYES…VSYF), 101–121 (LNAI…SGLL), 146–166 (MILG…LLVI), 234–254 (IISL…VWAN), 263–283 (WDPK…YLHI), and 295–315 (AIVA…VNLL).

The protein belongs to the CcmF/CycK/Ccl1/NrfE/CcsA family. In terms of assembly, may interact with Ccs1.

The protein resides in the plastid. The protein localises to the chloroplast thylakoid membrane. Functionally, required during biogenesis of c-type cytochromes (cytochrome c6 and cytochrome f) at the step of heme attachment. The chain is Cytochrome c biogenesis protein CcsA from Capsella bursa-pastoris (Shepherd's purse).